A 379-amino-acid chain; its full sequence is 1-deoxy-D-xylulose 5-phosphate reductoisomerase (379 aa).

NADPH contacts are provided by Thr-10, Gly-11, Ser-12, Val-13, and Asn-121. Lys-122 lines the 1-deoxy-D-xylulose 5-phosphate pocket. Glu-123 is a binding site for NADPH. Asp-147 serves as a coordination point for Mn(2+). The 1-deoxy-D-xylulose 5-phosphate site is built by Ser-148, Glu-149, Ser-173, and His-196. Glu-149 provides a ligand contact to Mn(2+). Gly-202 contributes to the NADPH binding site. Ser-209, Asn-214, Lys-215, and Glu-218 together coordinate 1-deoxy-D-xylulose 5-phosphate. Glu-218 is a Mn(2+) binding site.

The protein belongs to the DXR family. Requires Mg(2+) as cofactor. The cofactor is Mn(2+).

It catalyses the reaction 2-C-methyl-D-erythritol 4-phosphate + NADP(+) = 1-deoxy-D-xylulose 5-phosphate + NADPH + H(+). It participates in isoprenoid biosynthesis; isopentenyl diphosphate biosynthesis via DXP pathway; isopentenyl diphosphate from 1-deoxy-D-xylulose 5-phosphate: step 1/6. Its function is as follows. Catalyzes the NADPH-dependent rearrangement and reduction of 1-deoxy-D-xylulose-5-phosphate (DXP) to 2-C-methyl-D-erythritol 4-phosphate (MEP). This chain is 1-deoxy-D-xylulose 5-phosphate reductoisomerase, found in Chlamydia abortus (strain DSM 27085 / S26/3) (Chlamydophila abortus).